The chain runs to 157 residues: N-acetylgalactosamine-specific phosphotransferase enzyme IIB component 2 (157 aa).

Residues 1-157 (MPNIVLSRID…EPAVDLFKLL (157 aa)) form the PTS EIIB type-4 domain. Histidine 15 acts as the Pros-phosphohistidine intermediate in catalysis.

Its subcellular location is the cytoplasm. In terms of biological role, the phosphoenolpyruvate-dependent sugar phosphotransferase system (sugar PTS), a major carbohydrate active -transport system, catalyzes the phosphorylation of incoming sugar substrates concomitantly with their translocation across the cell membrane. This system is involved in N-acetylgalactosamine transport. This chain is N-acetylgalactosamine-specific phosphotransferase enzyme IIB component 2 (agaV), found in Escherichia coli (strain K12).